The sequence spans 226 residues: Enolase-phosphatase E1 (226 aa).

Mg(2+) contacts are provided by Asp-9 and Glu-11. Substrate contacts are provided by residues 115–116 and Lys-160; that span reads SS. A Mg(2+)-binding site is contributed by Asp-185.

It belongs to the HAD-like hydrolase superfamily. MasA/MtnC family. As to quaternary structure, monomer. The cofactor is Mg(2+).

The protein localises to the cytoplasm. Its subcellular location is the nucleus. It catalyses the reaction 5-methylsulfanyl-2,3-dioxopentyl phosphate + H2O = 1,2-dihydroxy-5-(methylsulfanyl)pent-1-en-3-one + phosphate. It functions in the pathway amino-acid biosynthesis; L-methionine biosynthesis via salvage pathway; L-methionine from S-methyl-5-thio-alpha-D-ribose 1-phosphate: step 3/6. Its pathway is amino-acid biosynthesis; L-methionine biosynthesis via salvage pathway; L-methionine from S-methyl-5-thio-alpha-D-ribose 1-phosphate: step 4/6. Bifunctional enzyme that catalyzes the enolization of 2,3-diketo-5-methylthiopentyl-1-phosphate (DK-MTP-1-P) into the intermediate 2-hydroxy-3-keto-5-methylthiopentenyl-1-phosphate (HK-MTPenyl-1-P), which is then dephosphorylated to form the acireductone 1,2-dihydroxy-3-keto-5-methylthiopentene (DHK-MTPene). The chain is Enolase-phosphatase E1 from Zygosaccharomyces rouxii (strain ATCC 2623 / CBS 732 / NBRC 1130 / NCYC 568 / NRRL Y-229).